Reading from the N-terminus, the 122-residue chain is Large ribosomal subunit protein uL14c (122 aa).

It belongs to the universal ribosomal protein uL14 family. As to quaternary structure, part of the 50S ribosomal subunit.

It is found in the plastid. The protein localises to the chloroplast. In terms of biological role, binds to 23S rRNA. This is Large ribosomal subunit protein uL14c from Illicium oligandrum (Star anise).